Consider the following 89-residue polypeptide: Small ribosomal subunit protein uS14 (89 aa).

Belongs to the universal ribosomal protein uS14 family. As to quaternary structure, part of the 30S ribosomal subunit. Contacts proteins S3 and S10.

In terms of biological role, binds 16S rRNA, required for the assembly of 30S particles and may also be responsible for determining the conformation of the 16S rRNA at the A site. This is Small ribosomal subunit protein uS14 from Azobacteroides pseudotrichonymphae genomovar. CFP2.